A 456-amino-acid chain; its full sequence is Cysteine--tRNA ligase (456 aa).

Cys-30 serves as a coordination point for Zn(2+). A 'HIGH' region motif is present at residues 32 to 42 (MTVYDFCHIGH). Positions 211, 236, and 240 each coordinate Zn(2+). Positions 268 to 272 (KMSKS) match the 'KMSKS' region motif. Lys-271 contributes to the ATP binding site.

The protein belongs to the class-I aminoacyl-tRNA synthetase family. In terms of assembly, monomer. Zn(2+) is required as a cofactor.

It is found in the cytoplasm. The catalysed reaction is tRNA(Cys) + L-cysteine + ATP = L-cysteinyl-tRNA(Cys) + AMP + diphosphate. The protein is Cysteine--tRNA ligase of Dichelobacter nodosus (strain VCS1703A).